We begin with the raw amino-acid sequence, 358 residues long: Probable branched-chain-amino-acid aminotransferase (358 aa).

The residue at position 196 (Lys-196) is an N6-(pyridoxal phosphate)lysine.

The protein belongs to the class-IV pyridoxal-phosphate-dependent aminotransferase family. Pyridoxal 5'-phosphate serves as cofactor.

It carries out the reaction L-leucine + 2-oxoglutarate = 4-methyl-2-oxopentanoate + L-glutamate. The catalysed reaction is L-isoleucine + 2-oxoglutarate = (S)-3-methyl-2-oxopentanoate + L-glutamate. The enzyme catalyses L-valine + 2-oxoglutarate = 3-methyl-2-oxobutanoate + L-glutamate. The protein operates within amino-acid biosynthesis; L-isoleucine biosynthesis; L-isoleucine from 2-oxobutanoate: step 4/4. Its pathway is amino-acid biosynthesis; L-leucine biosynthesis; L-leucine from 3-methyl-2-oxobutanoate: step 4/4. It participates in amino-acid biosynthesis; L-valine biosynthesis; L-valine from pyruvate: step 4/4. Its function is as follows. Acts on leucine, isoleucine and valine. This chain is Probable branched-chain-amino-acid aminotransferase (ilvE), found in Staphylococcus epidermidis (strain ATCC 12228 / FDA PCI 1200).